We begin with the raw amino-acid sequence, 101 residues long: NADH-quinone oxidoreductase subunit K (101 aa).

3 consecutive transmembrane segments (helical) span residues Leu-4–Leu-24, Ile-30–Phe-50, and Phe-62–Val-82.

This sequence belongs to the complex I subunit 4L family. As to quaternary structure, NDH-1 is composed of 14 different subunits. Subunits NuoA, H, J, K, L, M, N constitute the membrane sector of the complex.

Its subcellular location is the cell inner membrane. It catalyses the reaction a quinone + NADH + 5 H(+)(in) = a quinol + NAD(+) + 4 H(+)(out). Its function is as follows. NDH-1 shuttles electrons from NADH, via FMN and iron-sulfur (Fe-S) centers, to quinones in the respiratory chain. The immediate electron acceptor for the enzyme in this species is believed to be ubiquinone. Couples the redox reaction to proton translocation (for every two electrons transferred, four hydrogen ions are translocated across the cytoplasmic membrane), and thus conserves the redox energy in a proton gradient. This is NADH-quinone oxidoreductase subunit K from Xanthomonas axonopodis pv. citri (strain 306).